Reading from the N-terminus, the 1336-residue chain is Mating factor M secretion protein mam1 (1336 aa).

Residues 1-29 (MHIHSDLSLPQFEHASIDPPSYSPQKSSF) are disordered. Over 1 to 91 (MHIHSDLSLP…ELAGVSSWSD (91 aa)) the chain is Cytoplasmic. Residues 92–112 (FFYLFHFSDIPLIFGTLIFTC) traverse the membrane as a helical segment. One can recognise an ABC transmembrane type-1 1 domain in the interval 104-396 (IFGTLIFTCL…ILPAIPDLIK (293 aa)). At 113–153 (LSAALEPLMTWTTGKVFDALSQYATSQITLGKMISLINFNS) the chain is on the extracellular side. The helical transmembrane segment at 154–174 (LLITIFGLASCVFSFGVRFLW) threads the bilayer. Over 175 to 250 (QYLSAIAGKR…SCLIISFRYS (76 aa)) the chain is Cytoplasmic. The chain crosses the membrane as a helical span at residues 251–271 (WSLTLVVLASYPIIILVVGFI). The Extracellular portion of the chain corresponds to 272-778 (NSFLSSAYEK…KSIWKVKKLR (507 aa)). The ABC transporter 1 domain maps to 433-668 (FRFDNVSFAY…EDFENNVSID (236 aa)). N-linked (GlcNAc...) asparagine glycosylation is found at asparagine 437 and asparagine 454. Residue 469–476 (GPSGSGKS) coordinates ATP. 3 N-linked (GlcNAc...) asparagine glycosylation sites follow: asparagine 536, asparagine 664, and asparagine 697. Residues 779–799 (WFFLLGLLTSLIQGASVPIFA) traverse the membrane as a helical segment. The region spanning 781–1066 (FLLGLLTSLI…CIMSLPNVSA (286 aa)) is the ABC transmembrane type-1 2 domain. Residues 800-897 (YVISKCLNLF…ISDMRNMISS (98 aa)) are Cytoplasmic-facing. A helical transmembrane segment spans residues 898 to 918 (LIEEVFIAFTMAIIGIAWSFA). At 919–1336 (TGWRLAAVLV…KLIHRGEWIE (418 aa)) the chain is on the extracellular side. Asparagine 1011, asparagine 1063, and asparagine 1120 each carry an N-linked (GlcNAc...) asparagine glycan. Residues 1099 to 1331 (IEFDGVSFAY…HTHFWKLIHR (233 aa)) form the ABC transporter 2 domain. ATP is bound at residue 1135–1142 (GISGSGKS). N-linked (GlcNAc...) asparagine glycans are attached at residues asparagine 1235 and asparagine 1280.

It belongs to the ABC transporter superfamily. Alpha-factor sex pheromone exporter (TC 3.A.1.206) family.

It localises to the membrane. In terms of biological role, required in S.pombe M (minus) cells for production of M-factor pheromone. Involved in the transport of the farnesyl-derivation of the M-factor pheromone. The polypeptide is Mating factor M secretion protein mam1 (mam1) (Schizosaccharomyces pombe (strain 972 / ATCC 24843) (Fission yeast)).